An 827-amino-acid chain; its full sequence is Inactive rhomboid protein 2 (827 aa).

The segment at Met-1–Gln-87 is disordered. Residues Met-1–Thr-380 are Cytoplasmic-facing. Ser-60 bears the Phosphoserine mark. Residues Gln-64–Pro-77 are compositionally biased toward basic and acidic residues. Phosphoserine is present on residues Ser-84, Ser-88, Ser-294, Ser-296, and Ser-299. The helical transmembrane segment at Phe-381 to Phe-401 threads the bilayer. Topologically, residues Ala-402 to Ser-631 are lumenal. Residues Leu-632–Leu-652 traverse the membrane as a helical segment. Residues Arg-653–Arg-663 lie on the Cytoplasmic side of the membrane. Residues Ile-664 to Pro-684 traverse the membrane as a helical segment. Residues Tyr-685–Arg-686 lie on the Lumenal side of the membrane. Residues Ala-687 to Phe-707 form a helical membrane-spanning segment. The Cytoplasmic portion of the chain corresponds to Gln-708–Lys-718. A helical transmembrane segment spans residues Ala-719–Ile-739. Residues Asp-740 to His-744 lie on the Lumenal side of the membrane. Residues Ile-745–Gly-765 traverse the membrane as a helical segment. The Cytoplasmic portion of the chain corresponds to Thr-766–Arg-773. A helical membrane pass occupies residues Ala-774–Leu-794. Topologically, residues Tyr-795 to His-827 are lumenal.

This sequence belongs to the peptidase S54 family. In terms of assembly, interacts with EGF. Interacts (via cytoplasmic N-terminus) with FRMD8/iTAP; this interaction leads to mutual protein stabilization. Interacts with ADAM17/TACE. In terms of tissue distribution, detected in retina and spleen.

The protein localises to the endoplasmic reticulum membrane. It is found in the cell membrane. Functionally, regulates ADAM17 protease, a sheddase of the epidermal growth factor (EGF) receptor ligands and TNF, thereby plays a role in sleep, cell survival, proliferation, migration and inflammation. Does not exhibit any protease activity on its own. This chain is Inactive rhomboid protein 2 (RHBDF2), found in Canis lupus familiaris (Dog).